A 159-amino-acid chain; its full sequence is Transcription elongation factor GreA (159 aa).

Belongs to the GreA/GreB family.

In terms of biological role, necessary for efficient RNA polymerase transcription elongation past template-encoded arresting sites. The arresting sites in DNA have the property of trapping a certain fraction of elongating RNA polymerases that pass through, resulting in locked ternary complexes. Cleavage of the nascent transcript by cleavage factors such as GreA or GreB allows the resumption of elongation from the new 3'terminus. GreA releases sequences of 2 to 3 nucleotides. The chain is Transcription elongation factor GreA from Buchnera aphidicola subsp. Baizongia pistaciae (strain Bp).